Here is a 113-residue protein sequence, read N- to C-terminus: Large ribosomal subunit protein eL34 (113 aa).

Belongs to the eukaryotic ribosomal protein eL34 family.

The polypeptide is Large ribosomal subunit protein eL34 (Methanopyrus kandleri (strain AV19 / DSM 6324 / JCM 9639 / NBRC 100938)).